The primary structure comprises 394 residues: NADH-quinone oxidoreductase subunit D 2 (394 aa).

The protein belongs to the complex I 49 kDa subunit family. In terms of assembly, NDH-1 is composed of 14 different subunits. Subunits NuoB, C, D, E, F, and G constitute the peripheral sector of the complex.

The protein resides in the cell membrane. It catalyses the reaction a quinone + NADH + 5 H(+)(in) = a quinol + NAD(+) + 4 H(+)(out). NDH-1 shuttles electrons from NADH, via FMN and iron-sulfur (Fe-S) centers, to quinones in the respiratory chain. The immediate electron acceptor for the enzyme in this species is believed to be a menaquinone. Couples the redox reaction to proton translocation (for every two electrons transferred, four hydrogen ions are translocated across the cytoplasmic membrane), and thus conserves the redox energy in a proton gradient. This is NADH-quinone oxidoreductase subunit D 2 from Streptomyces griseus subsp. griseus (strain JCM 4626 / CBS 651.72 / NBRC 13350 / KCC S-0626 / ISP 5235).